Reading from the N-terminus, the 37-residue chain is MKVRASVKKMCDKCRVIRRHGRVMVICENPKHKQRQG.

This sequence belongs to the bacterial ribosomal protein bL36 family.

This is Large ribosomal subunit protein bL36 from Synechococcus sp. (strain WH7803).